Here is a 181-residue protein sequence, read N- to C-terminus: U1 small nuclear ribonucleoprotein C (181 aa).

The segment at 2–34 adopts a Matrin-type zinc-finger fold; that stretch reads PKCDYCDVYLTHDSMSVRKAHNSGRNHLRNVVD. Pro residues-rich tracts occupy residues 129-143 and 150-174; these read PGMP…PGGL and PIPP…PPPG. The disordered stretch occupies residues 129-181; sequence PGMPAGMPFPPPGGLPPNFQFPIPPPGGFPGMPPPGQGFPGMPPPGGNHDERR.

This sequence belongs to the U1 small nuclear ribonucleoprotein C family. As to quaternary structure, U1 snRNP is composed of the 7 core Sm proteins B/B', D1, D2, D3, E, F and G that assemble in a heptameric protein ring on the Sm site of the small nuclear RNA to form the core snRNP, and at least 3 U1 snRNP-specific proteins U1-70K, U1-A and U1-C. U1-C interacts with U1 snRNA and the 5' splice-site region of the pre-mRNA.

Its subcellular location is the nucleus. Its function is as follows. Component of the spliceosomal U1 snRNP, which is essential for recognition of the pre-mRNA 5' splice-site and the subsequent assembly of the spliceosome. U1-C is directly involved in initial 5' splice-site recognition for both constitutive and regulated alternative splicing. The interaction with the 5' splice-site seems to precede base-pairing between the pre-mRNA and the U1 snRNA. Stimulates commitment or early (E) complex formation by stabilizing the base pairing of the 5' end of the U1 snRNA and the 5' splice-site region. This is U1 small nuclear ribonucleoprotein C from Sclerotinia sclerotiorum (strain ATCC 18683 / 1980 / Ss-1) (White mold).